Here is an 813-residue protein sequence, read N- to C-terminus: Sorting nexin-29 (813 aa).

Residues 36 to 180 enclose the RUN domain; that stretch reads SDSDSRVTCL…ILFAINIDNK (145 aa). Residues serine 268, serine 291, serine 292, serine 330, and serine 344 each carry the phosphoserine modification. The segment at 269–299 is disordered; sequence FDDEEDEQNSGDVFKKTPGAGESSEDNSDRS. Residues 346–357 show a composition bias toward acidic residues; the sequence is DDEDVDENEDDV. A disordered region spans residues 346 to 378; the sequence is DDEDVDENEDDVYGNSSGRKHRGHSESPEKPLE. Phosphoserine is present on residues serine 445 and serine 450. Residues 466-545 are a coiled coil; sequence TISELRQATV…VLKVQLKKYV (80 aa). Phosphoserine is present on serine 639. Threonine 641 carries the phosphothreonine modification. Residues serine 642 and serine 646 each carry the phosphoserine modification. In terms of domain architecture, PX spans 656-779; that stretch reads ALINVWIPSV…PFFVDITPPG (124 aa). The tract at residues 778–813 is disordered; that stretch reads PGEPVNSRPKAASRFPKLSRGQPRETRNVEPQSGDL.

It belongs to the sorting nexin family.

This is Sorting nexin-29 (SNX29) from Homo sapiens (Human).